Here is a 430-residue protein sequence, read N- to C-terminus: Cysteate synthase (430 aa).

K106 bears the N6-(pyridoxal phosphate)lysine mark. 2 residues coordinate pyridoxal 5'-phosphate: N132 and T381.

It belongs to the threonine synthase family. Cysteate synthase subfamily. As to quaternary structure, homotrimer. It depends on pyridoxal 5'-phosphate as a cofactor.

It carries out the reaction O-phospho-L-serine + sulfite + H(+) = L-cysteate + phosphate. It functions in the pathway cofactor biosynthesis; coenzyme M biosynthesis. Its function is as follows. Specifically catalyzes the beta-elimination of phosphate from L-phosphoserine and the beta-addition of sulfite to the dehydroalanine intermediate to produce L-cysteate. The polypeptide is Cysteate synthase (Methanoculleus marisnigri (strain ATCC 35101 / DSM 1498 / JR1)).